A 359-amino-acid polypeptide reads, in one-letter code: C-X-C chemokine receptor type 2 (359 aa).

Residues 1–47 lie on the Extracellular side of the membrane; the sequence is MGEFKVDKFNIEDFFSGDLDIFNYSSGMPSILPDAVPCHSENLEINS. The N-linked (GlcNAc...) asparagine glycan is linked to Asn23. Residues 48 to 74 traverse the membrane as a helical segment; sequence YAVVVIYVLVTLLSLVGNSLVMLVILY. Residues 75–83 lie on the Cytoplasmic side of the membrane; that stretch reads NRSTCSVTD. A helical membrane pass occupies residues 84 to 104; the sequence is VYLLNLAIADLFFALTLPVWA. The Extracellular portion of the chain corresponds to 105–119; it reads ASKVNGWTFGSTLCK. Cys118 and Cys195 are disulfide-bonded. A helical membrane pass occupies residues 120 to 141; it reads IFSYVKEVTFYSSVLLLACISM. The Cytoplasmic portion of the chain corresponds to 142–162; the sequence is DRYLAIVHATSTLIQKRHLVK. The helical transmembrane segment at 163-182 threads the bilayer; sequence FVCIAMWLLSVILALPILIL. The Extracellular segment spans residues 183–207; that stretch reads RNPVKVNLSTLVCYEDVGNNTSRLR. The chain crosses the membrane as a helical span at residues 208–230; sequence VVLRILPQTFGFLVPLLIMLFCY. At 231–250 the chain is on the cytoplasmic side; it reads GFTLRTLFKAHMGQKHRAMR. The chain crosses the membrane as a helical span at residues 251–272; the sequence is VIFAVVLVFLLCWLPYNLVLFT. Over 273 to 293 the chain is Extracellular; it reads DTLMRTKLIKETCERRDDIDK. Residues 294-314 form a helical membrane-spanning segment; the sequence is ALNATEILGFLHSCLNPIIYA. The Cytoplasmic portion of the chain corresponds to 315-359; the sequence is FIGQKFRHGLLKIMATYGLVSKEFLAKEGRPSFVSSSSANTSTTL.

The protein belongs to the G-protein coupled receptor 1 family. Interacts with IL8. Interacts with GNAI2. In terms of processing, phosphorylated upon ligand binding; which is required for desensitization.

It localises to the cell membrane. Its function is as follows. Receptor for interleukin-8 which is a powerful neutrophil chemotactic factor. Binding of IL-8 to the receptor causes activation of neutrophils. This response is mediated via a G-protein that activates a phosphatidylinositol-calcium second messenger system. Binds to IL-8 with high affinity. Also binds with high affinity to CXCL3, GRO/MGSA and NAP-2. In Mus musculus (Mouse), this protein is C-X-C chemokine receptor type 2 (Cxcr2).